Consider the following 488-residue polypeptide: Katanin p60 ATPase-containing subunit A-like 1 (488 aa).

Met1 is modified (N-acetylmethionine). The segment at 128 to 179 (GAGARGLVGRAHQISKSDKAASRDKDYRARGRDDKARKNMQDGASDGEIPKF) is disordered. Over residues 142–167 (SKSDKAASRDKDYRARGRDDKARKNM) the composition is skewed to basic and acidic residues. Phosphoserine is present on Ser172. An ATP-binding site is contributed by 246-253 (GPPGTGKT).

This sequence belongs to the AAA ATPase family. Katanin p60 subunit A1 subfamily. A-like 1 sub-subfamily. As to quaternary structure, interacts with KATNB1 and KATNBL1.

It is found in the cytoplasm. The protein localises to the cytoskeleton. Its subcellular location is the spindle pole. The protein resides in the spindle. The catalysed reaction is n ATP + n H2O + a microtubule = n ADP + n phosphate + (n+1) alpha/beta tubulin heterodimers.. Its function is as follows. Regulates microtubule dynamics in Sertoli cells, a process that is essential for spermiogenesis and male fertility. Severs microtubules in an ATP-dependent manner, promoting rapid reorganization of cellular microtubule arrays. Has microtubule-severing activity in vitro. This Rattus norvegicus (Rat) protein is Katanin p60 ATPase-containing subunit A-like 1 (Katnal1).